The following is a 142-amino-acid chain: Large ribosomal subunit protein uL13 (142 aa).

The protein belongs to the universal ribosomal protein uL13 family. As to quaternary structure, part of the 50S ribosomal subunit.

Its function is as follows. This protein is one of the early assembly proteins of the 50S ribosomal subunit, although it is not seen to bind rRNA by itself. It is important during the early stages of 50S assembly. This Cupriavidus necator (strain ATCC 17699 / DSM 428 / KCTC 22496 / NCIMB 10442 / H16 / Stanier 337) (Ralstonia eutropha) protein is Large ribosomal subunit protein uL13.